The primary structure comprises 608 residues: Fatty acid amide hydrolase (608 aa).

Active-site charge relay system residues include lysine 206 and serine 282. 303 to 306 provides a ligand contact to substrate; the sequence is GGGS. Serine 306 serves as the catalytic Acyl-ester intermediate.

This sequence belongs to the amidase family. In terms of assembly, forms homodimers.

Its subcellular location is the endoplasmic reticulum membrane. It is found in the cell membrane. The enzyme catalyses N-(9Z,12Z-octadecadienoyl)-ethanolamine + H2O = ethanolamine + (9Z,12Z)-octadecadienoate. It carries out the reaction N-hexadecanoylethanolamine + H2O = ethanolamine + hexadecanoate. It catalyses the reaction N-dodecanoylethanolamine + H2O = dodecanoate + ethanolamine. Its activity is regulated as follows. Inhibited by methyl arachidonyl fluorophosphonate (MAFP). Its function is as follows. Catalyzes the hydrolysis of bioactive endogenous fatty acid amides to their corresponding acids. The hydrolysis of endogenous amidated lipids terminates their participation as lipid mediators in various signaling systems. Converts a wide range of N-acylethanolamines (NAEs) to their corresponding free fatty acids and ethanolamine. This Oryza sativa subsp. japonica (Rice) protein is Fatty acid amide hydrolase.